A 100-amino-acid polypeptide reads, in one-letter code: Large ribosomal subunit protein uL23 (100 aa).

Belongs to the universal ribosomal protein uL23 family. As to quaternary structure, part of the 50S ribosomal subunit. Contacts protein L29, and trigger factor when it is bound to the ribosome.

In terms of biological role, one of the early assembly proteins it binds 23S rRNA. One of the proteins that surrounds the polypeptide exit tunnel on the outside of the ribosome. Forms the main docking site for trigger factor binding to the ribosome. In Edwardsiella ictaluri (strain 93-146), this protein is Large ribosomal subunit protein uL23.